An 881-amino-acid polypeptide reads, in one-letter code: Heat shock protein 70 homolog LHS1 (881 aa).

Positions 1–20 (MRNVLRLLFLTAFVAIGSLA) are cleaved as a signal peptide. N-linked (GlcNAc...) asparagine glycosylation is found at asparagine 128, asparagine 458, asparagine 474, asparagine 481, asparagine 489, asparagine 527, and asparagine 844. Over residues 833–844 (RKLEQEKSRNNN) the composition is skewed to basic and acidic residues. Residues 833–881 (RKLEQEKSRNNNETESTVINSADDKTTIVNDKTTESNPSSEEDILHDEL) form a disordered region. Over residues 859–871 (TIVNDKTTESNPS) the composition is skewed to polar residues. Over residues 872 to 881 (SEEDILHDEL) the composition is skewed to acidic residues. Residues 878-881 (HDEL) carry the Prevents secretion from ER motif.

It belongs to the heat shock protein 70 family. In terms of assembly, interacts with the heat shock protein 70 (HSP70) KAR2, and this stimulates nucleotide exchange on KAR2. KAR2 in turn acts to stimulate the ATPase activity of LHS1. In terms of processing, N-glycosylated.

The protein localises to the endoplasmic reticulum lumen. It carries out the reaction ATP + H2O = ADP + phosphate + H(+). Chaperone required for protein translocation and folding in the endoplasmic reticulum. The sequence is that of Heat shock protein 70 homolog LHS1 (LHS1) from Saccharomyces cerevisiae (strain ATCC 204508 / S288c) (Baker's yeast).